The following is a 1751-amino-acid chain: Non-reducing polyketide synthase afvB (1751 aa).

The segment at Phe-19–His-249 is N-terminal acylcarrier protein transacylase domain (SAT). Positions His-381–Glu-811 constitute a Ketosynthase family 3 (KS3) domain. Catalysis depends on for beta-ketoacyl synthase activity residues Cys-554, His-689, and His-730. Residues Phe-910–Val-1228 form a malonyl-CoA:ACP transacylase (MAT) domain region. The segment at Thr-1291–Asp-1607 is product template (PT) domain. The segment at His-1295 to Ser-1429 is N-terminal hotdog fold. A PKS/mFAS DH domain is found at His-1295 to Ser-1603. The Proton acceptor; for dehydratase activity role is filled by His-1327. The segment at Leu-1456–Ser-1603 is C-terminal hotdog fold. Asp-1514 functions as the Proton donor; for dehydratase activity in the catalytic mechanism. The tract at residues Asp-1610–Asn-1670 is disordered. The segment covering Gln-1612–Glu-1657 has biased composition (polar residues). Positions Asn-1670 to Gln-1747 constitute a Carrier domain. O-(pantetheine 4'-phosphoryl)serine is present on Ser-1707.

Requires pantetheine 4'-phosphate as cofactor. In terms of tissue distribution, expressed mainly in sclerotia, with expression levels 20-fold and 10-fold greater than the expression levels of this gene found in mycelium and conidia, respectively.

It participates in secondary metabolite biosynthesis. In terms of biological role, non-reducing polyketide synthase (NRPKS); part of the gene cluster that mediates the biosynthesis of aflavarin, a bicoumarin that exhibits anti-insectan activity against the fungivorous beetle C.hemipterus. Catalyzes the formation of the aromatic polyketide from acetyl coenzyme A and seven malonyl coenzyme A molecules. In Aspergillus flavus (strain ATCC 200026 / FGSC A1120 / IAM 13836 / NRRL 3357 / JCM 12722 / SRRC 167), this protein is Non-reducing polyketide synthase afvB.